Reading from the N-terminus, the 339-residue chain is Scoulerine-9-O-methyltransferase 3 (339 aa).

Residue M161 participates in S-adenosyl-L-methionine binding. A substrate-binding site is contributed by D164. Residues T165, G191, D214, D228–V229, and K242 each bind S-adenosyl-L-methionine. A substrate-binding site is contributed by S243 to E247. H246 functions as the Proton acceptor in the catalytic mechanism.

It belongs to the class I-like SAM-binding methyltransferase superfamily. Cation-independent O-methyltransferase family. COMT subfamily. As to quaternary structure, homodimer. Forms heterodimer with SOMT2. The heterodimer SOMT2-SOMT3 possesses 3-O-acetyl-4'-O-demethylpapaveroxine 4'-O-methyltransferase activity, where SOMT2 is the catalytic subunit. In terms of tissue distribution, highly expressed in capsules. Expressed is stems. Expressed at low levels in roots.

It carries out the reaction (S)-scoulerine + S-adenosyl-L-methionine = (S)-tetrahydrocolumbamine + S-adenosyl-L-homocysteine + H(+). Its pathway is alkaloid biosynthesis. Its function is as follows. Methyltransferase involved in the biosynthesis of the benzylisoquinoline alkaloid noscapine. Catalyzes the conversion of (S)-scoulerine to (S)-tetrahydrocolumbamine. This chain is Scoulerine-9-O-methyltransferase 3, found in Papaver somniferum (Opium poppy).